Here is a 93-residue protein sequence, read N- to C-terminus: Small ribosomal subunit protein uS19 (93 aa).

Belongs to the universal ribosomal protein uS19 family.

Protein S19 forms a complex with S13 that binds strongly to the 16S ribosomal RNA. This chain is Small ribosomal subunit protein uS19, found in Alkaliphilus oremlandii (strain OhILAs) (Clostridium oremlandii (strain OhILAs)).